The primary structure comprises 225 residues: Ribosome maturation factor RimM (225 aa).

Residues 144–225 form the PRC barrel domain; it reads ADEFYWVDLI…RIVVDWEADY (82 aa).

Belongs to the RimM family. As to quaternary structure, binds ribosomal protein uS19.

Its subcellular location is the cytoplasm. An accessory protein needed during the final step in the assembly of 30S ribosomal subunit, possibly for assembly of the head region. Essential for efficient processing of 16S rRNA. May be needed both before and after RbfA during the maturation of 16S rRNA. It has affinity for free ribosomal 30S subunits but not for 70S ribosomes. The protein is Ribosome maturation factor RimM of Burkholderia vietnamiensis (strain G4 / LMG 22486) (Burkholderia cepacia (strain R1808)).